Here is a 499-residue protein sequence, read N- to C-terminus: Chaperone SurA (499 aa).

An N-terminal signal peptide occupies residues 1–36 (MKRQEFALFSLTLMLSPWRRVLLPAVLAAMAGPALA). 2 consecutive PpiC domains span residues 231–333 (PTEF…KLTA) and 352–450 (ITQT…QVEN).

The protein resides in the periplasm. The enzyme catalyses [protein]-peptidylproline (omega=180) = [protein]-peptidylproline (omega=0). Functionally, chaperone involved in the correct folding and assembly of outer membrane proteins. Recognizes specific patterns of aromatic residues and the orientation of their side chains, which are found more frequently in integral outer membrane proteins. May act in both early periplasmic and late outer membrane-associated steps of protein maturation. In Cupriavidus pinatubonensis (strain JMP 134 / LMG 1197) (Cupriavidus necator (strain JMP 134)), this protein is Chaperone SurA.